A 493-amino-acid polypeptide reads, in one-letter code: Glutamyl-tRNA(Gln) amidotransferase subunit A (493 aa).

Catalysis depends on charge relay system residues lysine 79 and serine 159. Serine 183 acts as the Acyl-ester intermediate in catalysis.

Belongs to the amidase family. GatA subfamily. In terms of assembly, heterotrimer of A, B and C subunits.

It carries out the reaction L-glutamyl-tRNA(Gln) + L-glutamine + ATP + H2O = L-glutaminyl-tRNA(Gln) + L-glutamate + ADP + phosphate + H(+). Its function is as follows. Allows the formation of correctly charged Gln-tRNA(Gln) through the transamidation of misacylated Glu-tRNA(Gln) in organisms which lack glutaminyl-tRNA synthetase. The reaction takes place in the presence of glutamine and ATP through an activated gamma-phospho-Glu-tRNA(Gln). This is Glutamyl-tRNA(Gln) amidotransferase subunit A from Rhizobium etli (strain ATCC 51251 / DSM 11541 / JCM 21823 / NBRC 15573 / CFN 42).